The sequence spans 107 residues: Large ribosomal subunit protein uL24 (107 aa).

The protein belongs to the universal ribosomal protein uL24 family. Part of the 50S ribosomal subunit.

Functionally, one of two assembly initiator proteins, it binds directly to the 5'-end of the 23S rRNA, where it nucleates assembly of the 50S subunit. One of the proteins that surrounds the polypeptide exit tunnel on the outside of the subunit. The polypeptide is Large ribosomal subunit protein uL24 (Streptomyces coelicolor (strain ATCC BAA-471 / A3(2) / M145)).